We begin with the raw amino-acid sequence, 323 residues long: ATP synthase gamma chain (323 aa).

This sequence belongs to the ATPase gamma chain family. As to quaternary structure, F-type ATPases have 2 components, CF(1) - the catalytic core - and CF(0) - the membrane proton channel. CF(1) has five subunits: alpha(3), beta(3), gamma(1), delta(1), epsilon(1). CF(0) has three main subunits: a, b and c.

The protein localises to the cell inner membrane. Produces ATP from ADP in the presence of a proton gradient across the membrane. The gamma chain is believed to be important in regulating ATPase activity and the flow of protons through the CF(0) complex. This chain is ATP synthase gamma chain, found in Rickettsia peacockii (strain Rustic).